Here is a 713-residue protein sequence, read N- to C-terminus: Polyribonucleotide nucleotidyltransferase (713 aa).

2 residues coordinate Mg(2+): aspartate 493 and aspartate 499. The KH domain occupies proline 560–isoleucine 619. The 69-residue stretch at glycine 629–lysine 697 folds into the S1 motif domain.

The protein belongs to the polyribonucleotide nucleotidyltransferase family. It depends on Mg(2+) as a cofactor.

It localises to the cytoplasm. The catalysed reaction is RNA(n+1) + phosphate = RNA(n) + a ribonucleoside 5'-diphosphate. In terms of biological role, involved in mRNA degradation. Catalyzes the phosphorolysis of single-stranded polyribonucleotides processively in the 3'- to 5'-direction. This is Polyribonucleotide nucleotidyltransferase from Burkholderia pseudomallei (strain 1106a).